The primary structure comprises 384 residues: DNA dC-&gt;dU-editing enzyme APOBEC-3G (384 aa).

The segment at 1-60 (MNPQFRNMVDGMDPHKFSYNFKNRPILSRRNTVWLCYEVKTKGPSRPPLDAKIFRGQVYF) is essential for cytoplasmic localization. CMP/dCMP-type deaminase domains are found at residues 29 to 138 (RRNT…LRSL) and 214 to 328 (GRHE…LRTL). Threonine 32 carries the post-translational modification Phosphothreonine; by PKA. Zn(2+)-binding residues include histidine 65, cysteine 97, and cysteine 100. The segment at 209-336 (EPCVEGRHET…TLDEAEAKIS (128 aa)) is necessary for homooligomerization. The tract at residues 213-215 (EGR) is interaction with DNA. A Phosphothreonine; by PKA and CAMK2 modification is found at threonine 218. Histidine 257 contacts Zn(2+). Glutamate 259 (proton donor) is an active-site residue. Zn(2+) is bound by residues cysteine 288 and cysteine 291. Positions 313 to 320 (RIYDDQGR) are interaction with DNA.

The protein belongs to the cytidine and deoxycytidylate deaminase family. As to quaternary structure, homodimer. Zn(2+) serves as cofactor.

The protein localises to the cytoplasm. It is found in the nucleus. It localises to the P-body. The enzyme catalyses a 2'-deoxycytidine in single-stranded DNA + H2O + H(+) = a 2'-deoxyuridine in single-stranded DNA + NH4(+). Functionally, DNA deaminase (cytidine deaminase) which acts as an inhibitor of retrovirus replication and retrotransposon mobility. After the penetration of retroviral nucleocapsids into target cells of infection and the initiation of reverse transcription, it can induce the conversion of cytosine to uracil in the minus-sense single-strand viral DNA, leading to G-to-A hypermutations in the subsequent plus-strand viral DNA. The resultant detrimental levels of mutations in the proviral genome, along with a deamination-independent mechanism that works prior to the proviral integration, together exert efficient antiretroviral effects in infected target cells. Selectively targets single-stranded DNA and does not deaminate double-stranded DNA or single- or double-stranded RNA. The protein is DNA dC-&gt;dU-editing enzyme APOBEC-3G (APOBEC3G) of Pongo pygmaeus (Bornean orangutan).